A 499-amino-acid chain; its full sequence is Glycerol kinase (499 aa).

Thr-12 is a binding site for ADP. Residues Thr-12, Thr-13, and Ser-14 each contribute to the ATP site. Thr-12 lines the sn-glycerol 3-phosphate pocket. Arg-16 is a binding site for ADP. The sn-glycerol 3-phosphate site is built by Arg-82, Glu-83, Tyr-134, and Asp-243. The glycerol site is built by Arg-82, Glu-83, Tyr-134, Asp-243, and Gln-244. Positions 265 and 308 each coordinate ADP. 4 residues coordinate ATP: Thr-265, Gly-308, Gln-312, and Gly-411. Gly-411 provides a ligand contact to ADP.

Belongs to the FGGY kinase family.

It carries out the reaction glycerol + ATP = sn-glycerol 3-phosphate + ADP + H(+). It functions in the pathway polyol metabolism; glycerol degradation via glycerol kinase pathway; sn-glycerol 3-phosphate from glycerol: step 1/1. Inhibited by fructose 1,6-bisphosphate (FBP). In terms of biological role, key enzyme in the regulation of glycerol uptake and metabolism. Catalyzes the phosphorylation of glycerol to yield sn-glycerol 3-phosphate. In Agrobacterium fabrum (strain C58 / ATCC 33970) (Agrobacterium tumefaciens (strain C58)), this protein is Glycerol kinase.